We begin with the raw amino-acid sequence, 344 residues long: MLLSKLVDLIKSGNSNFIKANIFENIDIQNAASLDVASKNQISFLEENNILKENLGRTAVSAIITFNNSEILGLLESKNISNIVVENPRIAFAEVLNYLYEQINFNPGIDDSVVMKESSKLGENCYLGPNVYIGENTVIGNNNKIFPGTTILGNVRLGDNNIIHPNCVIYENTRIENNCVINSNTVIGSEGFGFIPQDGKWIKMPQKGSVIIKSFVEIGTNCCVDRPSVGNTLIDEGTKIDNLVQIGHGVKIGKNCALAAQVGIAGGAVIGDGVILAGQVGVNNRVKVGNNVIASSKCGIHCDIEDGEVVSGFPAMKNKSWLRSSSIFKKLPELAKKLRQLDKK.

His-248 acts as the Proton acceptor in catalysis.

This sequence belongs to the transferase hexapeptide repeat family. LpxD subfamily. As to quaternary structure, homotrimer.

The catalysed reaction is a UDP-3-O-[(3R)-3-hydroxyacyl]-alpha-D-glucosamine + a (3R)-hydroxyacyl-[ACP] = a UDP-2-N,3-O-bis[(3R)-3-hydroxyacyl]-alpha-D-glucosamine + holo-[ACP] + H(+). The protein operates within bacterial outer membrane biogenesis; LPS lipid A biosynthesis. Functionally, catalyzes the N-acylation of UDP-3-O-acylglucosamine using 3-hydroxyacyl-ACP as the acyl donor. Is involved in the biosynthesis of lipid A, a phosphorylated glycolipid that anchors the lipopolysaccharide to the outer membrane of the cell. The protein is UDP-3-O-acylglucosamine N-acyltransferase of Prochlorococcus marinus (strain MIT 9515).